A 420-amino-acid chain; its full sequence is Glucose-1-phosphate adenylyltransferase (420 aa).

Alpha-D-glucose 1-phosphate is bound by residues tyrosine 107, glycine 173, 188–189 (EK), and serine 206.

The protein belongs to the bacterial/plant glucose-1-phosphate adenylyltransferase family. In terms of assembly, homotetramer.

The catalysed reaction is alpha-D-glucose 1-phosphate + ATP + H(+) = ADP-alpha-D-glucose + diphosphate. Its pathway is glycan biosynthesis; glycogen biosynthesis. Its function is as follows. Involved in the biosynthesis of ADP-glucose, a building block required for the elongation reactions to produce glycogen. Catalyzes the reaction between ATP and alpha-D-glucose 1-phosphate (G1P) to produce pyrophosphate and ADP-Glc. The sequence is that of Glucose-1-phosphate adenylyltransferase from Shewanella frigidimarina (strain NCIMB 400).